A 1444-amino-acid chain; its full sequence is Probable chitinase LysM18 (1444 aa).

LysM domains lie at 256–302 (STVQ…HFCC) and 321–369 (TTYT…IICL). The Chitin-binding type-1 domain occupies 382–450 (NAECGPQVPG…TNGCISNCGT (69 aa)). 4 disulfides stabilise this stretch: Cys385-Cys413, Cys407-Cys419, Cys412-Cys426, and Cys444-Cys448. In terms of domain architecture, GH18 spans 461–831 (YRKVGFYEGF…STSWTKFTSD (371 aa)). Glu582 functions as the Proton donor in the catalytic mechanism. 2 residues coordinate chitin: Tyr583 and Trp808.

It belongs to the glycosyl hydrolase 18 family. Chitinase class V subfamily.

The catalysed reaction is Random endo-hydrolysis of N-acetyl-beta-D-glucosaminide (1-&gt;4)-beta-linkages in chitin and chitodextrins.. Probable chitinase involved in the degradation of chitin, a component of the cell walls of fungi and exoskeletal elements of some animals (including worms and arthropods). Might be involved in manipulation of host defenses for successful infection. This is Probable chitinase LysM18 from Penicillium expansum (Blue mold rot fungus).